A 321-amino-acid chain; its full sequence is HPr kinase/phosphorylase (321 aa).

Active-site residues include histidine 143 and lysine 164. Residue 158 to 165 (GKSGVGKS) coordinates ATP. A Mg(2+)-binding site is contributed by serine 165. Aspartate 182 (proton acceptor; for phosphorylation activity. Proton donor; for dephosphorylation activity) is an active-site residue. The important for the catalytic mechanism of both phosphorylation and dephosphorylation stretch occupies residues 206–215 (MEIRGLGILN). Glutamate 207 contacts Mg(2+). Arginine 248 is a catalytic residue. An important for the catalytic mechanism of dephosphorylation region spans residues 269–274 (PVRPGR).

It belongs to the HPrK/P family. In terms of assembly, homohexamer. Mg(2+) is required as a cofactor.

The catalysed reaction is [HPr protein]-L-serine + ATP = [HPr protein]-O-phospho-L-serine + ADP + H(+). It carries out the reaction [HPr protein]-O-phospho-L-serine + phosphate + H(+) = [HPr protein]-L-serine + diphosphate. Its function is as follows. Catalyzes the ATP- as well as the pyrophosphate-dependent phosphorylation of a specific serine residue in HPr, a phosphocarrier protein of the phosphoenolpyruvate-dependent sugar phosphotransferase system (PTS). HprK/P also catalyzes the pyrophosphate-producing, inorganic phosphate-dependent dephosphorylation (phosphorolysis) of seryl-phosphorylated HPr (P-Ser-HPr). This is HPr kinase/phosphorylase from Leptospira interrogans serogroup Icterohaemorrhagiae serovar copenhageni (strain Fiocruz L1-130).